Reading from the N-terminus, the 321-residue chain is Methionyl-tRNA formyltransferase (321 aa).

111-114 (GLLP) contacts (6S)-5,6,7,8-tetrahydrofolate.

Belongs to the Fmt family.

It carries out the reaction L-methionyl-tRNA(fMet) + (6R)-10-formyltetrahydrofolate = N-formyl-L-methionyl-tRNA(fMet) + (6S)-5,6,7,8-tetrahydrofolate + H(+). In terms of biological role, attaches a formyl group to the free amino group of methionyl-tRNA(fMet). The formyl group appears to play a dual role in the initiator identity of N-formylmethionyl-tRNA by promoting its recognition by IF2 and preventing the misappropriation of this tRNA by the elongation apparatus. The protein is Methionyl-tRNA formyltransferase of Chlamydia abortus (strain DSM 27085 / S26/3) (Chlamydophila abortus).